Reading from the N-terminus, the 98-residue chain is NADH-ubiquinone oxidoreductase chain 4L (98 aa).

A run of 3 helical transmembrane segments spans residues 1–21 (MTPV…GLAF), 29–49 (ALLC…LWAL), and 59–79 (APML…ALLV).

Belongs to the complex I subunit 4L family.

The protein localises to the mitochondrion membrane. It catalyses the reaction a ubiquinone + NADH + 5 H(+)(in) = a ubiquinol + NAD(+) + 4 H(+)(out). In terms of biological role, core subunit of the mitochondrial membrane respiratory chain NADH dehydrogenase (Complex I) which catalyzes electron transfer from NADH through the respiratory chain, using ubiquinone as an electron acceptor. Part of the enzyme membrane arm which is embedded in the lipid bilayer and involved in proton translocation. The sequence is that of NADH-ubiquinone oxidoreductase chain 4L (MT-ND4L) from Carassius auratus (Goldfish).